Consider the following 30-residue polypeptide: Bacteriocin SRCAM 37 (30 aa).

It belongs to the bacteriocin class IIA/YGNGV family.

The protein resides in the secreted. Bacteriocin with antibacterial activity against C.jejuni. The sequence is that of Bacteriocin SRCAM 37 from Paenibacillus polymyxa (Bacillus polymyxa).